A 54-amino-acid chain; its full sequence is Large ribosomal subunit protein bL33 (54 aa).

Belongs to the bacterial ribosomal protein bL33 family.

The polypeptide is Large ribosomal subunit protein bL33 (Elusimicrobium minutum (strain Pei191)).